A 130-amino-acid polypeptide reads, in one-letter code: Histone H2A type 1-F (130 aa).

Positions 1–22 are disordered; sequence MSGRGKQGGKARAKAKTRSSRA. Phosphoserine; by RPS6KA5 is present on S2. R4 carries the citrulline; alternate modification. R4 carries the symmetric dimethylarginine; by PRMT5; alternate modification. Residues K6 and K10 each carry the N6-(2-hydroxyisobutyryl)lysine modification. Positions 7–19 are enriched in basic residues; that stretch reads QGGKARAKAKTRS. At K10 the chain carries N6-lactoyllysine; alternate. At K37 the chain carries N6-(2-hydroxyisobutyryl)lysine; alternate. The residue at position 37 (K37) is an N6-(beta-hydroxybutyryl)lysine; alternate. An N6-crotonyllysine; alternate modification is found at K37. N6-(2-hydroxyisobutyryl)lysine occurs at positions 75, 76, and 96. Position 96 is an N6-glutaryllysine; alternate (K96). Q105 bears the N5-methylglutamine mark. The residue at position 119 (K119) is an N6-(2-hydroxyisobutyryl)lysine; alternate. Residues K119 and K120 each carry the N6-crotonyllysine; alternate modification. 2 positions are modified to N6-glutaryllysine; alternate: K119 and K120. A Glycyl lysine isopeptide (Lys-Gly) (interchain with G-Cter in ubiquitin); alternate cross-link involves residue K120. T121 carries the post-translational modification Phosphothreonine; by DCAF1. K126 carries the N6-crotonyllysine; alternate modification. K126 is subject to N6-glutaryllysine; alternate.

It belongs to the histone H2A family. As to quaternary structure, the nucleosome is a histone octamer containing two molecules each of H2A, H2B, H3 and H4 assembled in one H3-H4 heterotetramer and two H2A-H2B heterodimers. The octamer wraps approximately 147 bp of DNA. Deiminated on Arg-4 in granulocytes upon calcium entry. In terms of processing, monoubiquitination of Lys-120 (H2AK119Ub) by RING1, TRIM37 and RNF2/RING2 complex gives a specific tag for epigenetic transcriptional repression and participates in X chromosome inactivation of female mammals. It is involved in the initiation of both imprinted and random X inactivation. Ubiquitinated H2A is enriched in inactive X chromosome chromatin. Ubiquitination of H2A functions downstream of methylation of 'Lys-27' of histone H3 (H3K27me). H2AK119Ub by RNF2/RING2 can also be induced by ultraviolet and may be involved in DNA repair. Following DNA double-strand breaks (DSBs), it is ubiquitinated through 'Lys-63' linkage of ubiquitin moieties by the E2 ligase UBE2N and the E3 ligases RNF8 and RNF168, leading to the recruitment of repair proteins to sites of DNA damage. Ubiquitination at Lys-14 and Lys-16 (H2AK13Ub and H2AK15Ub, respectively) in response to DNA damage is initiated by RNF168 that mediates monoubiquitination at these 2 sites, and 'Lys-63'-linked ubiquitin are then conjugated to monoubiquitin; RNF8 is able to extend 'Lys-63'-linked ubiquitin chains in vitro. H2AK119Ub and ionizing radiation-induced 'Lys-63'-linked ubiquitination (H2AK13Ub and H2AK15Ub) are distinct events. Post-translationally, phosphorylation on Ser-2 (H2AS1ph) is enhanced during mitosis. Phosphorylation on Ser-2 by RPS6KA5/MSK1 directly represses transcription. Acetylation of H3 inhibits Ser-2 phosphorylation by RPS6KA5/MSK1. Phosphorylation at Thr-121 (H2AT120ph) by DCAF1 is present in the regulatory region of many tumor suppresor genes and down-regulates their transcription. Symmetric dimethylation on Arg-4 by the PRDM1/PRMT5 complex may play a crucial role in the germ-cell lineage. In terms of processing, glutamine methylation at Gln-105 (H2AQ104me) by FBL is specifically dedicated to polymerase I. It is present at 35S ribosomal DNA locus and impairs binding of the FACT complex. Post-translationally, crotonylation (Kcr) is specifically present in male germ cells and marks testis-specific genes in post-meiotic cells, including X-linked genes that escape sex chromosome inactivation in haploid cells. Crotonylation marks active promoters and enhancers and confers resistance to transcriptional repressors. It is also associated with post-meiotically activated genes on autosomes. Lactylated in macrophages by EP300/P300 by using lactoyl-CoA directly derived from endogenous or exogenous lactate, leading to stimulates gene transcription.

It is found in the nucleus. The protein resides in the chromosome. Its function is as follows. Core component of nucleosome. Nucleosomes wrap and compact DNA into chromatin, limiting DNA accessibility to the cellular machineries which require DNA as a template. Histones thereby play a central role in transcription regulation, DNA repair, DNA replication and chromosomal stability. DNA accessibility is regulated via a complex set of post-translational modifications of histones, also called histone code, and nucleosome remodeling. The protein is Histone H2A type 1-F of Rattus norvegicus (Rat).